The primary structure comprises 356 residues: GTPase Obg (356 aa).

The 159-residue stretch at 1–159 folds into the Obg domain; sequence MKFLDEAKVY…RWIWLRMKLI (159 aa). Residues 160–327 form the OBG-type G domain; it reads ADAGLVGLPN…VLRALTDVIS (168 aa). GTP is bound by residues 166-173, 191-195, 212-215, 279-282, and 308-310; these read GLPNAGKS, FTTLH, DIPG, NKID, and SGV. Mg(2+) is bound by residues Ser173 and Thr193. Positions 329-356 are disordered; it reads APVSTKAKGEPTENETPPPSTGWSPLSN.

Belongs to the TRAFAC class OBG-HflX-like GTPase superfamily. OBG GTPase family. In terms of assembly, monomer. It depends on Mg(2+) as a cofactor.

The protein resides in the cytoplasm. In terms of biological role, an essential GTPase which binds GTP, GDP and possibly (p)ppGpp with moderate affinity, with high nucleotide exchange rates and a fairly low GTP hydrolysis rate. Plays a role in control of the cell cycle, stress response, ribosome biogenesis and in those bacteria that undergo differentiation, in morphogenesis control. In Afipia carboxidovorans (strain ATCC 49405 / DSM 1227 / KCTC 32145 / OM5) (Oligotropha carboxidovorans), this protein is GTPase Obg.